A 220-amino-acid polypeptide reads, in one-letter code: Heptaprenyl diphosphate synthase component 1 (220 aa).

As to quaternary structure, heterodimer of component I and II.

It catalyses the reaction 4 isopentenyl diphosphate + (2E,6E)-farnesyl diphosphate = all-trans-heptaprenyl diphosphate + 4 diphosphate. Functionally, supplies heptaprenyl diphosphate, the precursor for the side chain of the isoprenoid quinone menaquinone-7 (MQ-7). The protein is Heptaprenyl diphosphate synthase component 1 (hepS) of Geobacillus stearothermophilus (Bacillus stearothermophilus).